The sequence spans 336 residues: D-erythrose-4-phosphate dehydrogenase (336 aa).

An NAD(+)-binding site is contributed by 11 to 12 (RI). Residues 153–155 (SCT), arginine 199, 212–213 (TR), and arginine 235 each bind substrate. Cysteine 154 (nucleophile) is an active-site residue. NAD(+) is bound at residue asparagine 317.

It belongs to the glyceraldehyde-3-phosphate dehydrogenase family. Epd subfamily. In terms of assembly, homotetramer.

The protein localises to the cytoplasm. It carries out the reaction D-erythrose 4-phosphate + NAD(+) + H2O = 4-phospho-D-erythronate + NADH + 2 H(+). Its pathway is cofactor biosynthesis; pyridoxine 5'-phosphate biosynthesis; pyridoxine 5'-phosphate from D-erythrose 4-phosphate: step 1/5. Catalyzes the NAD-dependent conversion of D-erythrose 4-phosphate to 4-phosphoerythronate. This Alteromonas mediterranea (strain DSM 17117 / CIP 110805 / LMG 28347 / Deep ecotype) protein is D-erythrose-4-phosphate dehydrogenase.